We begin with the raw amino-acid sequence, 188 residues long: MNSEAEFLANHFLIAMPGLTDPHFAKTVTLVCQHNADGALGIIINRPSELKLSDIMRQMEIDLKVAELGDLPVFFGGPVHPERGFILHEPATVWASTLVVSERLALTTSRDILEAVGRGEGPRRMLLALGYAGWGQGQLEREIIDNSWLNAPSDNAVIFEHPPGRRWKAAADLVGVDISLLTSQAGHG.

This sequence belongs to the UPF0301 (AlgH) family.

This is UPF0301 protein MCA2336 2 from Methylococcus capsulatus (strain ATCC 33009 / NCIMB 11132 / Bath).